A 530-amino-acid polypeptide reads, in one-letter code: Glucose-6-phosphate isomerase (530 aa).

Residue E322 is the Proton donor of the active site. Residues H351 and K455 contribute to the active site.

Belongs to the GPI family.

Its subcellular location is the cytoplasm. The enzyme catalyses alpha-D-glucose 6-phosphate = beta-D-fructose 6-phosphate. It functions in the pathway carbohydrate biosynthesis; gluconeogenesis. Its pathway is carbohydrate degradation; glycolysis; D-glyceraldehyde 3-phosphate and glycerone phosphate from D-glucose: step 2/4. Its function is as follows. Catalyzes the reversible isomerization of glucose-6-phosphate to fructose-6-phosphate. The protein is Glucose-6-phosphate isomerase of Geotalea daltonii (strain DSM 22248 / JCM 15807 / FRC-32) (Geobacter daltonii).